We begin with the raw amino-acid sequence, 251 residues long: Cobalt transport protein CbiM (251 aa).

The first 27 residues, 1 to 27 (MNKKKNTILIGLYFLVGIMLFPDRIYA), serve as a signal peptide directing secretion. The next 6 membrane-spanning stretches (helical) occupy residues 35–55 (LPVK…ALGI), 66–86 (GPGI…LSSL), 103–123 (LGAI…VLIF), 131–151 (GGLT…PFVA), 166–186 (WLSV…TTAT), and 208–228 (VFAT…VLIF).

This sequence belongs to the CbiM family. Forms an energy-coupling factor (ECF) transporter complex composed of an ATP-binding protein (A component, CbiO), a transmembrane protein (T component, CbiQ) and 2 possible substrate-capture proteins (S components, CbiM and CbiN) of unknown stoichimetry.

The protein localises to the cell membrane. It participates in cofactor biosynthesis; adenosylcobalamin biosynthesis. Functionally, part of the energy-coupling factor (ECF) transporter complex CbiMNOQ involved in cobalt import. The protein is Cobalt transport protein CbiM of Acetohalobium arabaticum (strain ATCC 49924 / DSM 5501 / Z-7288).